Reading from the N-terminus, the 110-residue chain is Cytochrome c (110 aa).

Positions 21, 24, 25, and 87 each coordinate heme c.

It belongs to the cytochrome c family. In terms of processing, binds 1 heme c group covalently per subunit.

Its subcellular location is the mitochondrion intermembrane space. In terms of biological role, electron carrier protein. The oxidized form of the cytochrome c heme group can accept an electron from the heme group of the cytochrome c1 subunit of cytochrome reductase. Cytochrome c then transfers this electron to the cytochrome oxidase complex, the final protein carrier in the mitochondrial electron-transport chain. The sequence is that of Cytochrome c (CYCK) from Kluyveromyces lactis (strain ATCC 8585 / CBS 2359 / DSM 70799 / NBRC 1267 / NRRL Y-1140 / WM37) (Yeast).